The sequence spans 228 residues: Ribose-5-phosphate isomerase A (228 aa).

Substrate contacts are provided by residues 27-30 (TGTT), 86-89 (DGAD), and 100-103 (KGMG). The active-site Proton acceptor is the glutamate 109. A substrate-binding site is contributed by lysine 127.

Belongs to the ribose 5-phosphate isomerase family. As to quaternary structure, homodimer.

The enzyme catalyses aldehydo-D-ribose 5-phosphate = D-ribulose 5-phosphate. Its pathway is carbohydrate degradation; pentose phosphate pathway; D-ribose 5-phosphate from D-ribulose 5-phosphate (non-oxidative stage): step 1/1. Catalyzes the reversible conversion of ribose-5-phosphate to ribulose 5-phosphate. The protein is Ribose-5-phosphate isomerase A of Borreliella burgdorferi (strain ZS7) (Borrelia burgdorferi).